Consider the following 582-residue polypeptide: External alternative NADH-ubiquinone oxidoreductase, mitochondrial (582 aa).

The transit peptide at 1–30 directs the protein to the mitochondrion; it reads MLRLRPAVRAVSVARSVALTRSLHVSVAKF. The tract at residues 46-65 is disordered; that stretch reads KQTAGHQGHHQEIPKPDENH. The segment covering 54 to 65 has biased composition (basic and acidic residues); sequence HHQEIPKPDENH. Position 114–144 (114–144) interacts with FAD; the sequence is TLVVLGSGWGSVSFLKKLDTSNYNVIVVSPR. 277–313 provides a ligand contact to NAD(+); sequence LHTVVVGGGPTGVEFAAELQDFFEDDLRKWIPDIRDD. The stretch at 454-501 forms a coiled coil; it reads LLNGIAKTEDLNNEITNLEKQSEHTFDEQERKNIFAQLESKSRKLRRS.

It belongs to the NADH dehydrogenase family. It depends on FAD as a cofactor.

The protein localises to the mitochondrion inner membrane. The catalysed reaction is a quinone + NADH + H(+) = a quinol + NAD(+). The enzyme catalyses a ubiquinone + NADH + H(+) = a ubiquinol + NAD(+). In terms of biological role, alternative NADH-ubiquinone oxidoreductase which catalyzes the oxidation of mitochondrial NADH does not translocate protons across the inner mitochondrial membrane. This chain is External alternative NADH-ubiquinone oxidoreductase, mitochondrial (NDH2), found in Yarrowia lipolytica (strain CLIB 122 / E 150) (Yeast).